A 132-amino-acid polypeptide reads, in one-letter code: Small ribosomal subunit protein uS8 (132 aa).

It belongs to the universal ribosomal protein uS8 family. As to quaternary structure, part of the 30S ribosomal subunit. Contacts proteins S5 and S12.

Functionally, one of the primary rRNA binding proteins, it binds directly to 16S rRNA central domain where it helps coordinate assembly of the platform of the 30S subunit. This Christiangramia forsetii (strain DSM 17595 / CGMCC 1.15422 / KT0803) (Gramella forsetii) protein is Small ribosomal subunit protein uS8.